Reading from the N-terminus, the 173-residue chain is NADH-ubiquinone oxidoreductase chain 6 (173 aa).

5 helical membrane-spanning segments follow: residues 1–21, 27–47, 48–68, 87–107, and 139–159; these read MTYF…AVAS, YGVV…LSLG, ASFV…VVFV, VIGY…IGGF, and WGAG…FVVL.

It belongs to the complex I subunit 6 family.

It localises to the mitochondrion membrane. The catalysed reaction is a ubiquinone + NADH + 5 H(+)(in) = a ubiquinol + NAD(+) + 4 H(+)(out). Core subunit of the mitochondrial membrane respiratory chain NADH dehydrogenase (Complex I) that is believed to belong to the minimal assembly required for catalysis. Complex I functions in the transfer of electrons from NADH to the respiratory chain. The immediate electron acceptor for the enzyme is believed to be ubiquinone. The chain is NADH-ubiquinone oxidoreductase chain 6 (MT-ND6) from Brachyramphus brevirostris (Kittlitz's murrelet).